Reading from the N-terminus, the 758-residue chain is Ferrichrome receptor FcuA (758 aa).

Residues 1–36 form the signal peptide; sequence MNQTISSRAPQKRLAPRLLCVMIGAALGTLSASSWA. The TonB box motif lies at 66 to 73; it reads DTITVVGA. The 111-residue stretch at 106–216 folds into the TBDR plug domain; the sequence is DARNVPFNVI…VGGMINLEPK (111 aa). Residues 221–758 enclose the TBDR beta-barrel domain; it reads TPLTRVTVDY…ALKLSVSMDF (538 aa). The TonB C-terminal box motif lies at 741-758; it reads YIYQGDPRALKLSVSMDF.

It belongs to the TonB-dependent receptor family.

The protein resides in the cell outer membrane. Functionally, receptor for the hydroxamate siderophore, ferrichrome. Binds also to most other ferrichrome derivatives except enantio ferrichrome and ferric rhodotorulate. In Yersinia enterocolitica, this protein is Ferrichrome receptor FcuA (fcuA).